A 233-amino-acid polypeptide reads, in one-letter code: NAD(P)H-hydrate epimerase (233 aa).

In terms of domain architecture, YjeF N-terminal spans 10–217 (AINVDLELFN…ALQRKYELNL (208 aa)). 60 to 64 (NNGGD) lines the (6S)-NADPHX pocket. Positions 61 and 125 each coordinate K(+). (6S)-NADPHX-binding positions include 129 to 135 (GFSFKPP) and Asp158. Position 161 (Ser161) interacts with K(+).

The protein belongs to the NnrE/AIBP family. It depends on K(+) as a cofactor.

The enzyme catalyses (6R)-NADHX = (6S)-NADHX. It carries out the reaction (6R)-NADPHX = (6S)-NADPHX. Catalyzes the epimerization of the S- and R-forms of NAD(P)HX, a damaged form of NAD(P)H that is a result of enzymatic or heat-dependent hydration. This is a prerequisite for the S-specific NAD(P)H-hydrate dehydratase to allow the repair of both epimers of NAD(P)HX. This is NAD(P)H-hydrate epimerase from Drosophila grimshawi (Hawaiian fruit fly).